Reading from the N-terminus, the 209-residue chain is Orotate phosphoribosyltransferase (209 aa).

5-phospho-alpha-D-ribose 1-diphosphate is bound by residues arginine 96, lysine 100, histidine 102, and 122 to 130; that span reads EDLISTGKS. Serine 126 contributes to the orotate binding site.

This sequence belongs to the purine/pyrimidine phosphoribosyltransferase family. PyrE subfamily. In terms of assembly, homodimer. Requires Mg(2+) as cofactor.

It carries out the reaction orotidine 5'-phosphate + diphosphate = orotate + 5-phospho-alpha-D-ribose 1-diphosphate. Its pathway is pyrimidine metabolism; UMP biosynthesis via de novo pathway; UMP from orotate: step 1/2. Its function is as follows. Catalyzes the transfer of a ribosyl phosphate group from 5-phosphoribose 1-diphosphate to orotate, leading to the formation of orotidine monophosphate (OMP). This is Orotate phosphoribosyltransferase from Coxiella burnetii (strain RSA 493 / Nine Mile phase I).